Reading from the N-terminus, the 46-residue chain is Amine oxidase [flavin-containing] A (46 aa).

The protein belongs to the flavin monoamine oxidase family. In terms of assembly, monomer, homo- or heterodimer (containing two subunits of similar size). Each subunit contains a covalently bound flavin. Enzymatically active as monomer. It depends on FAD as a cofactor.

It localises to the mitochondrion outer membrane. It catalyses the reaction a secondary aliphatic amine + O2 + H2O = a primary amine + an aldehyde + H2O2. It carries out the reaction a primary methyl amine + O2 + H2O = an aldehyde + H2O2 + NH4(+). The enzyme catalyses (R)-adrenaline + O2 + H2O = (R)-3,4-dihydroxymandelaldehyde + methylamine + H2O2. The catalysed reaction is dopamine + O2 + H2O = 3,4-dihydroxyphenylacetaldehyde + H2O2 + NH4(+). It catalyses the reaction tyramine + O2 + H2O = (4-hydroxyphenyl)acetaldehyde + H2O2 + NH4(+). It carries out the reaction (R)-noradrenaline + O2 + H2O = (R)-3,4-dihydroxymandelaldehyde + H2O2 + NH4(+). The enzyme catalyses serotonin + O2 + H2O = (5-hydroxyindol-3-yl)acetaldehyde + H2O2 + NH4(+). The catalysed reaction is kynuramine + O2 + H2O = 3-(2-aminophenyl)-3-oxopropanal + H2O2 + NH4(+). It catalyses the reaction tryptamine + O2 + H2O = indole-3-acetaldehyde + H2O2 + NH4(+). It carries out the reaction 2-phenylethylamine + O2 + H2O = 2-phenylacetaldehyde + H2O2 + NH4(+). Catalyzes the oxidative deamination of primary and some secondary amine such as neurotransmitters, with concomitant reduction of oxygen to hydrogen peroxide and has important functions in the metabolism of neuroactive and vasoactive amines in the central nervous system and peripheral tissues. Preferentially oxidizes serotonin. Also catalyzes the oxidative deamination of kynuramine to 3-(2-aminophenyl)-3-oxopropanal that can spontaneously condense to 4-hydroxyquinoline. The protein is Amine oxidase [flavin-containing] A of Ovis aries (Sheep).